Reading from the N-terminus, the 602-residue chain is Potassium-transporting ATPase potassium-binding subunit (602 aa).

4 helical membrane-spanning segments follow: residues 5–25, 65–85, 136–156, and 179–199; these read AMLQ…PLGA, GYAV…YALQ, GLTV…IALI, and LYVL…QGAI. Residues 221–248 are disordered; the sequence is QDAKGNPVLGKDGKPVMEDKTSQTQTLP. Basic and acidic residues predominate over residues 231 to 241; that stretch reads KDGKPVMEDKT. Helical transmembrane passes span 283-303, 312-332, 419-439, 458-478, 523-543, and 566-586; these read LANF…CFLF, QGWA…VVET, GLYG…LMVG, AITI…AVSL, IMTG…ILAI, and LFVT…YVPA.

This sequence belongs to the KdpA family. The system is composed of three essential subunits: KdpA, KdpB and KdpC.

It is found in the cell inner membrane. Part of the high-affinity ATP-driven potassium transport (or Kdp) system, which catalyzes the hydrolysis of ATP coupled with the electrogenic transport of potassium into the cytoplasm. This subunit binds the periplasmic potassium ions and delivers the ions to the membrane domain of KdpB through an intramembrane tunnel. This Chromobacterium violaceum (strain ATCC 12472 / DSM 30191 / JCM 1249 / CCUG 213 / NBRC 12614 / NCIMB 9131 / NCTC 9757 / MK) protein is Potassium-transporting ATPase potassium-binding subunit.